The following is a 553-amino-acid chain: Coiled-coil domain-containing protein 22 homolog (553 aa).

The interval 236–264 (DSEEPAPPPISTVKPDASAEEEASPIQEL) is disordered. Coiled coils occupy residues 261-286 (IQEL…KAHA), 314-407 (ERTS…QSLA), and 498-549 (NVTK…VEQP).

This sequence belongs to the CCDC22 family.

This is Coiled-coil domain-containing protein 22 homolog from Drosophila erecta (Fruit fly).